The primary structure comprises 216 residues: Octanoyltransferase (216 aa).

A BPL/LPL catalytic domain is found at 31 to 205 (STTRDEVWLV…ELVTLLDYEQ (175 aa)). Substrate-binding positions include 70-77 (RGGQVTYH), 137-139 (SLG), and 150-152 (GLA). C168 functions as the Acyl-thioester intermediate in the catalytic mechanism.

Belongs to the LipB family.

The protein localises to the cytoplasm. The catalysed reaction is octanoyl-[ACP] + L-lysyl-[protein] = N(6)-octanoyl-L-lysyl-[protein] + holo-[ACP] + H(+). Its pathway is protein modification; protein lipoylation via endogenous pathway; protein N(6)-(lipoyl)lysine from octanoyl-[acyl-carrier-protein]: step 1/2. Functionally, catalyzes the transfer of endogenously produced octanoic acid from octanoyl-acyl-carrier-protein onto the lipoyl domains of lipoate-dependent enzymes. Lipoyl-ACP can also act as a substrate although octanoyl-ACP is likely to be the physiological substrate. The sequence is that of Octanoyltransferase from Vibrio cholerae serotype O1 (strain ATCC 39315 / El Tor Inaba N16961).